The following is a 216-amino-acid chain: UPF0134 protein MPN_344 (216 aa).

Residues 47-62 (FTIIEDQQDRPDKPEE) are compositionally biased toward basic and acidic residues. Disordered stretches follow at residues 47 to 104 (FTII…PKPD) and 194 to 216 (GKMD…LESK). Pro residues predominate over residues 68 to 78 (IPKPPKPPKGP). Residues 83–93 (EPGQPGGPDDP) show a composition bias toward low complexity.

This sequence belongs to the UPF0134 family.

This chain is UPF0134 protein MPN_344, found in Mycoplasma pneumoniae (strain ATCC 29342 / M129 / Subtype 1) (Mycoplasmoides pneumoniae).